Reading from the N-terminus, the 299-residue chain is Tyrosine recombinase XerC (299 aa).

Residues 1–85 (MQNELDAYFE…SVRGLYRYLN (85 aa)) form the Core-binding (CB) domain. One can recognise a Tyr recombinase domain in the interval 106–285 (RLPRLLDTDR…DFQHLAKVYD (180 aa)). Active-site residues include R146, K170, H237, R240, and H263. Y272 serves as the catalytic O-(3'-phospho-DNA)-tyrosine intermediate.

Belongs to the 'phage' integrase family. XerC subfamily. Forms a cyclic heterotetrameric complex composed of two molecules of XerC and two molecules of XerD.

The protein localises to the cytoplasm. Site-specific tyrosine recombinase, which acts by catalyzing the cutting and rejoining of the recombining DNA molecules. The XerC-XerD complex is essential to convert dimers of the bacterial chromosome into monomers to permit their segregation at cell division. It also contributes to the segregational stability of plasmids. This Stutzerimonas stutzeri (strain A1501) (Pseudomonas stutzeri) protein is Tyrosine recombinase XerC.